The sequence spans 792 residues: DNA ligase (792 aa).

NAD(+) contacts are provided by residues 42-46 (DAEYD), 91-92 (SL), and Glu-124. The N6-AMP-lysine intermediate role is filled by Lys-126. 4 residues coordinate NAD(+): Arg-147, Glu-189, Lys-306, and Lys-330. Zn(2+) is bound by residues Cys-424, Cys-426, Cys-448, and Cys-454. Residues 714 to 792 (KTDTAVAGKT…EDEWLAMVGG (79 aa)) form the BRCT domain.

The protein belongs to the NAD-dependent DNA ligase family. LigA subfamily. The cofactor is Mg(2+). Requires Mn(2+) as cofactor.

It carries out the reaction NAD(+) + (deoxyribonucleotide)n-3'-hydroxyl + 5'-phospho-(deoxyribonucleotide)m = (deoxyribonucleotide)n+m + AMP + beta-nicotinamide D-nucleotide.. DNA ligase that catalyzes the formation of phosphodiester linkages between 5'-phosphoryl and 3'-hydroxyl groups in double-stranded DNA using NAD as a coenzyme and as the energy source for the reaction. It is essential for DNA replication and repair of damaged DNA. This is DNA ligase from Caulobacter sp. (strain K31).